Consider the following 413-residue polypeptide: CinA-like protein (413 aa).

This sequence belongs to the CinA family.

This chain is CinA-like protein, found in Desulfosudis oleivorans (strain DSM 6200 / JCM 39069 / Hxd3) (Desulfococcus oleovorans).